A 61-amino-acid chain; its full sequence is Metallothionein-1 (61 aa).

N-acetylmethionine is present on M1. The beta stretch occupies residues 1–29 (MDPNCSCATGVSCTCADSCKCKECKCTSC). A divalent metal cation is bound by residues C5, C7, C13, C15, C19, C21, C24, C26, C29, C33, C34, C36, C37, C41, C44, C48, C50, C57, C59, and C60. An alpha region spans residues 30 to 61 (KKSCCSCCPVGCAKCAQGCVCKGASEKCNCCA).

It belongs to the metallothionein superfamily. Type 1 family.

Its function is as follows. Metallothioneins have a high content of cysteine residues that bind various heavy metals; these proteins are transcriptionally regulated by both heavy metals and glucocorticoids. This chain is Metallothionein-1 (MT1), found in Chlorocebus aethiops (Green monkey).